A 167-amino-acid polypeptide reads, in one-letter code: Phospholipase A2 (167 aa).

The N-terminal stretch at 1–18 is a signal peptide; it reads MQVVLGSLFLLLLSTSHG. Positions 19–33 are excised as a propeptide; it reads WQIRDRIGDNELEER. Trp-41, Gly-43, and Gly-45 together coordinate Ca(2+). 5 cysteine pairs are disulfide-bonded: Cys-42–Cys-64, Cys-63–Cys-103, Cys-70–Cys-96, Cys-94–Cys-128, and Cys-138–Cys-146. Asn-46 carries an N-linked (GlcNAc...) asparagine glycan. His-67 is a catalytic residue. Residue Asp-68 participates in Ca(2+) binding. Residue Asp-97 is part of the active site.

Belongs to the phospholipase A2 family. Group III subfamily. Ca(2+) serves as cofactor. In terms of processing, N-glycosylated; contains mannose, N-acetylglucosamine and fucose alphal-6 and/or alphal-3 linked to the innermost N-acetylglucosamine. In terms of tissue distribution, expressed by the venom gland.

It is found in the secreted. The catalysed reaction is a 1,2-diacyl-sn-glycero-3-phosphocholine + H2O = a 1-acyl-sn-glycero-3-phosphocholine + a fatty acid + H(+). Functionally, in vivo, intraplantar injection in mice cause spontaneous pain behaviors and paw swelling. PLA2 catalyzes the calcium-dependent hydrolysis of the 2-acyl groups in 3-sn-phosphoglycerides. The sequence is that of Phospholipase A2 from Apis mellifera (Honeybee).